The sequence spans 529 residues: Bifunctional purine biosynthesis protein PurH (529 aa).

One can recognise an MGS-like domain in the interval 1–148; that stretch reads MNNVRPIRRA…KNHKDTTIVV (148 aa).

The protein belongs to the PurH family.

The catalysed reaction is (6R)-10-formyltetrahydrofolate + 5-amino-1-(5-phospho-beta-D-ribosyl)imidazole-4-carboxamide = 5-formamido-1-(5-phospho-D-ribosyl)imidazole-4-carboxamide + (6S)-5,6,7,8-tetrahydrofolate. It catalyses the reaction IMP + H2O = 5-formamido-1-(5-phospho-D-ribosyl)imidazole-4-carboxamide. The protein operates within purine metabolism; IMP biosynthesis via de novo pathway; 5-formamido-1-(5-phospho-D-ribosyl)imidazole-4-carboxamide from 5-amino-1-(5-phospho-D-ribosyl)imidazole-4-carboxamide (10-formyl THF route): step 1/1. Its pathway is purine metabolism; IMP biosynthesis via de novo pathway; IMP from 5-formamido-1-(5-phospho-D-ribosyl)imidazole-4-carboxamide: step 1/1. The protein is Bifunctional purine biosynthesis protein PurH of Shewanella frigidimarina (strain NCIMB 400).